We begin with the raw amino-acid sequence, 197 residues long: Adenylyl-sulfate kinase (197 aa).

33–40 contributes to the ATP binding site; that stretch reads GLSGSGKS. The active-site Phosphoserine intermediate is the Ser-107.

Belongs to the APS kinase family.

It carries out the reaction adenosine 5'-phosphosulfate + ATP = 3'-phosphoadenylyl sulfate + ADP + H(+). It functions in the pathway sulfur metabolism; hydrogen sulfide biosynthesis; sulfite from sulfate: step 2/3. Catalyzes the synthesis of activated sulfate. The sequence is that of Adenylyl-sulfate kinase from Bacillus pumilus (strain SAFR-032).